Here is a 519-residue protein sequence, read N- to C-terminus: Cytosol aminopeptidase (519 aa).

Position 42 is a phosphoserine (Ser42). Lys45 bears the N6-succinyllysine mark. Ser54 is modified (phosphoserine). N6-succinyllysine occurs at positions 61 and 103. Residues Ser180 and Ser194 each carry the phosphoserine modification. Leu202, Met203, and Thr205 together coordinate Zn(2+). Lys221 bears the N6-acetyllysine; alternate mark. Position 221 is an N6-succinyllysine; alternate (Lys221). Ser238 carries the phosphoserine modification. Zn(2+)-binding residues include Lys282 and Asp287. Residues Lys282, Asp287, Ser292, and Lys294 each coordinate substrate. Residue Asp287 participates in Mg(2+) binding. Lys294 is an active-site residue. Zn(2+)-binding residues include Arg303, Asp305, Asp364, and Glu366. Asp305 and Asp364 together coordinate substrate. Mg(2+) is bound by residues Asp364 and Glu366. Arg368 is an active-site residue. At Lys455 the chain carries N6-acetyllysine; alternate. Residue Lys455 is modified to N6-succinyllysine; alternate. N6-succinyllysine is present on Lys476. Lys489 is modified (N6-acetyllysine; alternate). Lys489 is modified (N6-succinyllysine; alternate).

Belongs to the peptidase M17 family. As to quaternary structure, homohexamer. Zn(2+) is required as a cofactor. Mn(2+) serves as cofactor.

It localises to the cytoplasm. The enzyme catalyses Release of an N-terminal amino acid, Xaa-|-Yaa-, in which Xaa is preferably Leu, but may be other amino acids including Pro although not Arg or Lys, and Yaa may be Pro. Amino acid amides and methyl esters are also readily hydrolyzed, but rates on arylamides are exceedingly low.. It carries out the reaction an S-substituted L-cysteinylglycine + H2O = an S-substituted L-cysteine + glycine. The catalysed reaction is L-cysteinylglycine + H2O = L-cysteine + glycine. It catalyses the reaction S-benzyl-L-cysteinylglycine + H2O = S-benzyl-L-cysteine + glycine. The enzyme catalyses Release of N-terminal proline from a peptide.. In terms of biological role, cytosolic metallopeptidase that catalyzes the removal of unsubstituted N-terminal hydrophobic amino acids from various peptides. The presence of Zn(2+) ions is essential for the peptidase activity, and the association with other cofactors can modulate the substrate spectificity of the enzyme. For instance, in the presence of Mn(2+), it displays a specific Cys-Gly hydrolyzing activity of Cys-Gly-S-conjugates. Involved in the metabolism of glutathione and in the degradation of glutathione S-conjugates, which may play a role in the control of the cell redox status. The polypeptide is Cytosol aminopeptidase (Homo sapiens (Human)).